The following is a 513-amino-acid chain: ATP synthase subunit alpha (513 aa).

169–176 (GDRQTGKT) serves as a coordination point for ATP.

It belongs to the ATPase alpha/beta chains family. F-type ATPases have 2 components, CF(1) - the catalytic core - and CF(0) - the membrane proton channel. CF(1) has five subunits: alpha(3), beta(3), gamma(1), delta(1), epsilon(1). CF(0) has three main subunits: a(1), b(2) and c(9-12). The alpha and beta chains form an alternating ring which encloses part of the gamma chain. CF(1) is attached to CF(0) by a central stalk formed by the gamma and epsilon chains, while a peripheral stalk is formed by the delta and b chains.

The protein localises to the cell inner membrane. It catalyses the reaction ATP + H2O + 4 H(+)(in) = ADP + phosphate + 5 H(+)(out). Its function is as follows. Produces ATP from ADP in the presence of a proton gradient across the membrane. The alpha chain is a regulatory subunit. The polypeptide is ATP synthase subunit alpha (Shewanella sp. (strain ANA-3)).